The chain runs to 286 residues: Energy-coupling factor transporter ATP-binding protein EcfA2 (286 aa).

Residues 3-245 form the ABC transporter domain; that stretch reads IKIENLTYTY…IDTLEKVGLA (243 aa). ATP is bound at residue 40–47; the sequence is GHTGSGKS.

This sequence belongs to the ABC transporter superfamily. Energy-coupling factor EcfA family. In terms of assembly, forms a stable energy-coupling factor (ECF) transporter complex composed of 2 membrane-embedded substrate-binding proteins (S component), 2 ATP-binding proteins (A component) and 2 transmembrane proteins (T component).

The protein localises to the cell membrane. In terms of biological role, ATP-binding (A) component of a common energy-coupling factor (ECF) ABC-transporter complex. Unlike classic ABC transporters this ECF transporter provides the energy necessary to transport a number of different substrates. This is Energy-coupling factor transporter ATP-binding protein EcfA2 from Clostridium acetobutylicum (strain ATCC 824 / DSM 792 / JCM 1419 / IAM 19013 / LMG 5710 / NBRC 13948 / NRRL B-527 / VKM B-1787 / 2291 / W).